Here is a 517-residue protein sequence, read N- to C-terminus: Serine hydroxymethyltransferase 1, mitochondrial (517 aa).

The transit peptide at 1–30 directs the protein to the mitochondrion; it reads MAMAMALRRLSSSIDKPIRPLIRSTSCYMS. Lysine 286 carries the N6-(pyridoxal phosphate)lysine modification.

The protein belongs to the SHMT family. In terms of assembly, homotetramer. Interacts with GLU1. Interacts with UBP16. The cofactor is pyridoxal 5'-phosphate. In terms of processing, ubiquitinated. In terms of tissue distribution, ubiquitous. Mostly expressed in leaves, less abundant in stems, flowers and siliques, and barely detectable in roots.

The protein localises to the mitochondrion. It is found in the cytoplasm. It carries out the reaction (6R)-5,10-methylene-5,6,7,8-tetrahydrofolate + glycine + H2O = (6S)-5,6,7,8-tetrahydrofolate + L-serine. It functions in the pathway one-carbon metabolism; tetrahydrofolate interconversion. Its function is as follows. Functions in the photorespiratory pathway in catalyzing the interconversion of serine and glycine. Involved in controlling cell damage caused by abiotic stress, such as high light and salt and the hypersensitive defense response of plants. The chain is Serine hydroxymethyltransferase 1, mitochondrial from Arabidopsis thaliana (Mouse-ear cress).